The following is a 274-amino-acid chain: MKLEKDNAMDRADTLEQQNKEANIRAEKAEEEVHNLQKRMQQLENDLDQVQESLLKANTQLEEKDKALSNAEGEVAALNRRIQLLEEDLERSEERLNTATTKLAEASQAADESERMRKVLENRSLSDEERMDALENQLKEARFLAEEADRKYDEVARKLAMVEADLERAEERAETGESKFVELEEELRVVGNNLKSLEVSEEKANQREEAYKEQIKTLTNKLKAAEARAEFAERSVQKLQKEVDRLEDELVNEKEKYKSITDELDQTFSELSGY.

The interval 1 to 30 (MKLEKDNAMDRADTLEQQNKEANIRAEKAE) is disordered. Residues 1–274 (MKLEKDNAMD…DQTFSELSGY (274 aa)) adopt a coiled-coil conformation.

Belongs to the tropomyosin family. As to quaternary structure, homodimer.

In terms of biological role, tropomyosin, in association with the troponin complex, plays a central role in the calcium dependent regulation of muscle contraction. This chain is Tropomyosin, found in Panulirus stimpsoni (Chinese spiny lobster).